Here is a 438-residue protein sequence, read N- to C-terminus: Hydrogenobyrinate a,c-diamide synthase (438 aa).

The 192-residue stretch at 247 to 438 folds into the GATase cobBQ-type domain; sequence RIALAEDAAF…TFFHAIAKGG (192 aa). C329 acts as the Nucleophile in catalysis.

Belongs to the CobB/CbiA family. The cofactor is Mg(2+).

The catalysed reaction is hydrogenobyrinate + 2 L-glutamine + 2 ATP + 2 H2O = hydrogenobyrinate a,c-diamide + 2 L-glutamate + 2 ADP + 2 phosphate + 2 H(+). It functions in the pathway cofactor biosynthesis; adenosylcobalamin biosynthesis; cob(II)yrinate a,c-diamide from precorrin-2 (aerobic route): step 9/10. In terms of biological role, catalyzes the ATP-dependent amidation of the two carboxylate groups at positions a and c of hydrogenobyrinate, using either L-glutamine or ammonia as the nitrogen source. This Agrobacterium fabrum (strain C58 / ATCC 33970) (Agrobacterium tumefaciens (strain C58)) protein is Hydrogenobyrinate a,c-diamide synthase.